Reading from the N-terminus, the 554-residue chain is DDB1- and CUL4-associated factor 11 homolog (554 aa).

The interval 24 to 52 (QRMKNRNDSDTDFSDDDEETSGGCPKMTP) is disordered. The span at 33–43 (DTDFSDDDEET) shows a compositional bias: acidic residues. WD repeat units lie at residues 245–284 (QNQC…RIRT), 288–328 (AHED…DGDV), 336–375 (GHRD…CQGG), 414–458 (GHSV…VSRR), and 461–500 (GHQA…EGVI). Residues 527-554 (PQRKLRKPISARNAKCPTTSSEPDDFQI) form a disordered region.

The protein belongs to the WD repeat LEC14B family.

Involved in regulation of lifespan. Required for dopaminergic CEP neuron degeneration in response to Mn(2+). This Caenorhabditis briggsae protein is DDB1- and CUL4-associated factor 11 homolog (wdr-23).